Reading from the N-terminus, the 265-residue chain is Probable protein VP2 (265 aa).

Disordered regions lie at residues 44 to 110 (RLGR…DDLS), 152 to 171 (STRS…SDVA), and 194 to 265 (VQNA…CSSN). Over residues 48-60 (PQPPRPPGGPPGP) the composition is skewed to pro residues. Low complexity predominate over residues 152–168 (STRSTSTRASRSTDGTS). Basic residues predominate over residues 221–242 (GKTRPRKKPRAKQKPKKRRRYR). Over residues 243–265 (SSSNSSSKSNDSSDAESSTCSSN) the composition is skewed to low complexity.

Phosphorylated at C-terminal serines.

This is Probable protein VP2 from Torque teno virus (isolate Human/Germany/KAV/2001) (TTV).